Here is a 235-residue protein sequence, read N- to C-terminus: uncharacterized protein (235 aa).

2 disordered regions span residues 20–64 and 140–164; these read IHPN…LPIK and SQFF…NFDQ. Composition is skewed to low complexity over residues 30–60 and 140–161; these read NNNN…SNNN and SQFF…NNKN. The stretch at 174–213 forms a coiled coil; that stretch reads KYMEFLSDIEQLNSDLKESKDNLESISIEMVLLETRLKGL.

This is an uncharacterized protein from Dictyostelium discoideum (Social amoeba).